The sequence spans 609 residues: MFDAKKFLADVSHEPGVYRMYDDKDQVIYVGKAKDLKKRLSSYFRKNLSSKKTEALVASIHHIDTMLTSSETEALLLEHNFIKLYQPRYNVLLRDDKSYPFILLTKERHPRITSYRGSKKFAGEYFGPYPHAGAVRETLSLLQKLFPVRQCENSVYSNRSRPCLQYQIGRCSAPCVQGYVSDEEYNQQVELARLFLQGKDQQVLDYLIGKMEQASRNLDFEQAARYRDQIQAVRSVIEKQFVSNERLDDMDIMSIAYQHGLACVQVMFIRQGKVLGNRSYFPKVPANTDLSELTETFVGQFYLQGHQGRSIPNSIIVDRQLAEKSELEQLLTEQAGRKVTIQESVKGDKSKYLQLAQVNAKAALNVQLKQSSRMSERYQALCDLLNLPEIKRMECFDISHTMGNQTVASCVVFNQEGPLKSDYRRFNIEGITGGDDYAAMEQALQKRYERDLEEDKIPDIIFIDGGKGQLNRALNVFQHLQVKWDKNRPHLIGVAKGVDRRAGQEVLIISKQDREIHLPDDSLALHLIQHIRDESHNHAISGHRKKRQKAFTQSGLETIEGVGAKRRQALLKYLGGLQGVKKATLDEIASVPGISLKLAETIFETLKND.

Positions 13–91 (HEPGVYRMYD…IKLYQPRYNV (79 aa)) constitute a GIY-YIG domain. Positions 201–236 (QQVLDYLIGKMEQASRNLDFEQAARYRDQIQAVRSV) constitute a UVR domain.

It belongs to the UvrC family. In terms of assembly, interacts with UvrB in an incision complex.

The protein localises to the cytoplasm. The UvrABC repair system catalyzes the recognition and processing of DNA lesions. UvrC both incises the 5' and 3' sides of the lesion. The N-terminal half is responsible for the 3' incision and the C-terminal half is responsible for the 5' incision. This chain is UvrABC system protein C, found in Haemophilus influenzae (strain 86-028NP).